A 138-amino-acid polypeptide reads, in one-letter code: Hydrogenase maturation factor HypA (138 aa).

His-2 is a Ni(2+) binding site. Residues Cys-73, Cys-76, Cys-110, and Cys-113 each coordinate Zn(2+).

This sequence belongs to the HypA/HybF family.

Involved in the maturation of [NiFe] hydrogenases. Required for nickel insertion into the metal center of the hydrogenase. The sequence is that of Hydrogenase maturation factor HypA from Thermococcus sibiricus (strain DSM 12597 / MM 739).